A 123-amino-acid polypeptide reads, in one-letter code: Ig heavy chain V region H8 (123 aa).

Residues 1-114 form the Ig-like domain; sequence EVKLVESGGG…BSYWYFDVWG (114 aa).

The sequence is that of Ig heavy chain V region H8 from Mus musculus (Mouse).